The chain runs to 74 residues: DNA-directed RNA polymerase subunit omega (74 aa).

It belongs to the RNA polymerase subunit omega family. The RNAP catalytic core consists of 2 alpha, 1 beta, 1 beta' and 1 omega subunit. When a sigma factor is associated with the core the holoenzyme is formed, which can initiate transcription.

It catalyses the reaction RNA(n) + a ribonucleoside 5'-triphosphate = RNA(n+1) + diphosphate. Promotes RNA polymerase assembly. Latches the N- and C-terminal regions of the beta' subunit thereby facilitating its interaction with the beta and alpha subunits. The chain is DNA-directed RNA polymerase subunit omega from Helicobacter pylori (strain P12).